The chain runs to 230 residues: Response regulator MprA (230 aa).

Residues 4-118 (RILVVDDDRA…ELLARMRALL (115 aa)) enclose the Response regulatory domain. Asp-48 carries the 4-aspartylphosphate modification. Positions 129 to 227 (SPALTFLDLT…VRGVGYVLRE (99 aa)) form a DNA-binding region, ompR/PhoB-type.

Post-translationally, phosphorylated and dephosphorylated by MprB.

The protein localises to the cytoplasm. In terms of biological role, member of the two-component regulatory system MprB/MprA which contributes to maintaining a balance among several systems involved in stress resistance and is required for establishment and maintenance of persistent infection in the host. Functions as a transcriptional regulator that recognizes a 19-bp nucleotide motif comprizing two loosely conserved 8-bp direct DNA-binding motif repeats separated by a 3-bp spacer region. The protein is Response regulator MprA (mprA) of Mycobacterium sp. (strain JLS).